Consider the following 327-residue polypeptide: 7,8-didemethyl-8-hydroxy-5-deazariboflavin synthase (327 aa).

The region spanning 6–244 (ITFSRNVFLP…EEVAVQVAPN (239 aa)) is the Radical SAM core domain. Positions 20, 24, and 27 each coordinate [4Fe-4S] cluster.

It belongs to the radical SAM superfamily. CofG family. As to quaternary structure, consists of two subunits, CofG and CofH. The cofactor is [4Fe-4S] cluster.

The catalysed reaction is 5-amino-5-(4-hydroxybenzyl)-6-(D-ribitylimino)-5,6-dihydrouracil + S-adenosyl-L-methionine = 7,8-didemethyl-8-hydroxy-5-deazariboflavin + 5'-deoxyadenosine + L-methionine + NH4(+) + H(+). It participates in cofactor biosynthesis; coenzyme F0 biosynthesis. In terms of biological role, catalyzes the radical-mediated synthesis of 7,8-didemethyl-8-hydroxy-5-deazariboflavin from 5-amino-5-(4-hydroxybenzyl)-6-(D-ribitylimino)-5,6-dihydrouracil. The protein is 7,8-didemethyl-8-hydroxy-5-deazariboflavin synthase of Methanosphaerula palustris (strain ATCC BAA-1556 / DSM 19958 / E1-9c).